We begin with the raw amino-acid sequence, 373 residues long: Dual-specificity RNA methyltransferase RlmN (373 aa).

E94 (proton acceptor) is an active-site residue. The Radical SAM core domain occupies 100-339 (EDDRATLCVS…VIVRKTRGDD (240 aa)). C107 and C344 are disulfide-bonded. [4Fe-4S] cluster contacts are provided by C114, C118, and C121. Residues 168–169 (GE), S200, 222–224 (SIH), and N301 each bind S-adenosyl-L-methionine. The active-site S-methylcysteine intermediate is the C344.

The protein belongs to the radical SAM superfamily. RlmN family. Requires [4Fe-4S] cluster as cofactor.

The protein localises to the cytoplasm. The enzyme catalyses adenosine(2503) in 23S rRNA + 2 reduced [2Fe-2S]-[ferredoxin] + 2 S-adenosyl-L-methionine = 2-methyladenosine(2503) in 23S rRNA + 5'-deoxyadenosine + L-methionine + 2 oxidized [2Fe-2S]-[ferredoxin] + S-adenosyl-L-homocysteine. The catalysed reaction is adenosine(37) in tRNA + 2 reduced [2Fe-2S]-[ferredoxin] + 2 S-adenosyl-L-methionine = 2-methyladenosine(37) in tRNA + 5'-deoxyadenosine + L-methionine + 2 oxidized [2Fe-2S]-[ferredoxin] + S-adenosyl-L-homocysteine. Specifically methylates position 2 of adenine 2503 in 23S rRNA and position 2 of adenine 37 in tRNAs. m2A2503 modification seems to play a crucial role in the proofreading step occurring at the peptidyl transferase center and thus would serve to optimize ribosomal fidelity. The protein is Dual-specificity RNA methyltransferase RlmN of Shewanella oneidensis (strain ATCC 700550 / JCM 31522 / CIP 106686 / LMG 19005 / NCIMB 14063 / MR-1).